Reading from the N-terminus, the 584-residue chain is A-type ATP synthase subunit A (584 aa).

234 to 241 (GPFGSGKT) is an ATP binding site.

This sequence belongs to the ATPase alpha/beta chains family. As to quaternary structure, has multiple subunits with at least A(3), B(3), C, D, E, F, H, I and proteolipid K(x).

The protein localises to the cell membrane. The enzyme catalyses ATP + H2O + 4 H(+)(in) = ADP + phosphate + 5 H(+)(out). Component of the A-type ATP synthase that produces ATP from ADP in the presence of a proton gradient across the membrane. The A chain is the catalytic subunit. The sequence is that of A-type ATP synthase subunit A from Methanoculleus marisnigri (strain ATCC 35101 / DSM 1498 / JR1).